Consider the following 215-residue polypeptide: NAD(P)H-hydrate epimerase (215 aa).

Residues 10-211 (AQRYDAHATN…DIGIYAQDRV (202 aa)) enclose the YjeF N-terminal domain. 58–62 (NNGGD) lines the (6S)-NADPHX pocket. Positions 59 and 121 each coordinate K(+). Residues 125–131 (GVGLTRD) and aspartate 154 contribute to the (6S)-NADPHX site. Position 157 (serine 157) interacts with K(+).

Belongs to the NnrE/AIBP family. The cofactor is K(+).

It catalyses the reaction (6R)-NADHX = (6S)-NADHX. The enzyme catalyses (6R)-NADPHX = (6S)-NADPHX. Functionally, catalyzes the epimerization of the S- and R-forms of NAD(P)HX, a damaged form of NAD(P)H that is a result of enzymatic or heat-dependent hydration. This is a prerequisite for the S-specific NAD(P)H-hydrate dehydratase to allow the repair of both epimers of NAD(P)HX. The chain is NAD(P)H-hydrate epimerase from Levilactobacillus brevis (strain ATCC 367 / BCRC 12310 / CIP 105137 / JCM 1170 / LMG 11437 / NCIMB 947 / NCTC 947) (Lactobacillus brevis).